The chain runs to 247 residues: tRNA pseudouridine synthase A (247 aa).

The Nucleophile role is filled by aspartate 52. A substrate-binding site is contributed by tyrosine 113.

This sequence belongs to the tRNA pseudouridine synthase TruA family. Homodimer.

It carries out the reaction uridine(38/39/40) in tRNA = pseudouridine(38/39/40) in tRNA. Formation of pseudouridine at positions 38, 39 and 40 in the anticodon stem and loop of transfer RNAs. In Bartonella henselae (strain ATCC 49882 / DSM 28221 / CCUG 30454 / Houston 1) (Rochalimaea henselae), this protein is tRNA pseudouridine synthase A.